The chain runs to 384 residues: tRNA-specific 2-thiouridylase MnmA (384 aa).

Residues alanine 18–serine 25 and leucine 44 contribute to the ATP site. Residue cysteine 112 is the Nucleophile of the active site. The cysteines at positions 112 and 209 are disulfide-linked. Position 136 (glycine 136) interacts with ATP. The tract at residues arginine 159–glutamine 161 is interaction with tRNA. Cysteine 209 functions as the Cysteine persulfide intermediate in the catalytic mechanism.

Belongs to the MnmA/TRMU family.

It localises to the cytoplasm. The enzyme catalyses S-sulfanyl-L-cysteinyl-[protein] + uridine(34) in tRNA + AH2 + ATP = 2-thiouridine(34) in tRNA + L-cysteinyl-[protein] + A + AMP + diphosphate + H(+). Functionally, catalyzes the 2-thiolation of uridine at the wobble position (U34) of tRNA, leading to the formation of s(2)U34. The polypeptide is tRNA-specific 2-thiouridylase MnmA (Methylobacterium radiotolerans (strain ATCC 27329 / DSM 1819 / JCM 2831 / NBRC 15690 / NCIMB 10815 / 0-1)).